The chain runs to 487 residues: Bifunctional protein HldE (487 aa).

Residues 1-329 (MLHAVETAFY…GALLTDATYE (329 aa)) form a ribokinase region. Residue 204–207 (NRGE) coordinates ATP. Asp-274 is an active-site residue. Positions 356–487 (FTNGCFDLLH…GIVQRISAQK (132 aa)) are cytidylyltransferase.

The protein in the N-terminal section; belongs to the carbohydrate kinase PfkB family. In the C-terminal section; belongs to the cytidylyltransferase family. In terms of assembly, homodimer.

It carries out the reaction D-glycero-beta-D-manno-heptose 7-phosphate + ATP = D-glycero-beta-D-manno-heptose 1,7-bisphosphate + ADP + H(+). The enzyme catalyses D-glycero-beta-D-manno-heptose 1-phosphate + ATP + H(+) = ADP-D-glycero-beta-D-manno-heptose + diphosphate. The protein operates within nucleotide-sugar biosynthesis; ADP-L-glycero-beta-D-manno-heptose biosynthesis; ADP-L-glycero-beta-D-manno-heptose from D-glycero-beta-D-manno-heptose 7-phosphate: step 1/4. It functions in the pathway nucleotide-sugar biosynthesis; ADP-L-glycero-beta-D-manno-heptose biosynthesis; ADP-L-glycero-beta-D-manno-heptose from D-glycero-beta-D-manno-heptose 7-phosphate: step 3/4. In terms of biological role, catalyzes the phosphorylation of D-glycero-D-manno-heptose 7-phosphate at the C-1 position to selectively form D-glycero-beta-D-manno-heptose-1,7-bisphosphate. Its function is as follows. Catalyzes the ADP transfer from ATP to D-glycero-beta-D-manno-heptose 1-phosphate, yielding ADP-D-glycero-beta-D-manno-heptose. This Magnetococcus marinus (strain ATCC BAA-1437 / JCM 17883 / MC-1) protein is Bifunctional protein HldE.